The sequence spans 346 residues: MAVYAVTGGAGFLGRYIVKLLISADDVQEIRVIDIVEDPQPITSKVKVINYIQCDINDFDKVREALDGVNLIIHTAALVDVFGKYTDNEIMKVNYYGTQTILAACVDLGIKYLIYTSSMEAIGPNKHGNPFIGHEHTLYDISPGHVYAKSKRMAEQLVMKANNSVIMNGAKLYTCCLRPTGIYGEGDKLTKVFYEQCKQHGNIMYRTVDDDAVHSRVYVGNVAWMHVLAAKYIQYPGSAIKGNAYFCYDYSPSCSYDMFNLLLMKPLGIEQGSRIPRWMLKMYACKNDMKRILFRKPSILNNYTLKISNTTFEVRTNNAELDFNYSPIFDVDVAFERTRKWLEESE.

The active-site Proton acceptor is Tyr147. Lys151 provides a ligand contact to NAD(+).

This sequence belongs to the 3-beta-HSD family.

The catalysed reaction is a 3beta-hydroxy-Delta(5)-steroid + NAD(+) = a 3-oxo-Delta(5)-steroid + NADH + H(+). It carries out the reaction a 3-oxo-Delta(5)-steroid = a 3-oxo-Delta(4)-steroid. It functions in the pathway lipid metabolism; steroid biosynthesis. Catalyzes the oxidative conversion of Delta(5)-ene-3-beta-hydroxy steroid, and the oxidative conversion of ketosteroids. The 3-beta-HSD enzymatic system plays a crucial role in the biosynthesis of all classes of hormonal steroids. During viral infection, steroid production contributes to virulence by inhibiting the host inflammatory response. The polypeptide is 3 beta-hydroxysteroid dehydrogenase/Delta 5--&gt;4-isomerase (OPG174) (Monkeypox virus).